The sequence spans 174 residues: 3-hydroxydecanoyl-[acyl-carrier-protein] dehydratase (174 aa).

Histidine 73 is an active-site residue.

The protein belongs to the thioester dehydratase family. FabA subfamily. As to quaternary structure, homodimer.

The protein resides in the cytoplasm. The enzyme catalyses a (3R)-hydroxyacyl-[ACP] = a (2E)-enoyl-[ACP] + H2O. The catalysed reaction is (3R)-hydroxydecanoyl-[ACP] = (2E)-decenoyl-[ACP] + H2O. It carries out the reaction (2E)-decenoyl-[ACP] = (3Z)-decenoyl-[ACP]. The protein operates within lipid metabolism; fatty acid biosynthesis. Its function is as follows. Necessary for the introduction of cis unsaturation into fatty acids. Catalyzes the dehydration of (3R)-3-hydroxydecanoyl-ACP to E-(2)-decenoyl-ACP and then its isomerization to Z-(3)-decenoyl-ACP. Can catalyze the dehydratase reaction for beta-hydroxyacyl-ACPs with saturated chain lengths up to 16:0, being most active on intermediate chain length. This Saccharophagus degradans (strain 2-40 / ATCC 43961 / DSM 17024) protein is 3-hydroxydecanoyl-[acyl-carrier-protein] dehydratase.